Consider the following 368-residue polypeptide: Phosphoserine aminotransferase (368 aa).

Arg-44 contributes to the L-glutamate binding site. Residues 78-79 (AT), Trp-104, Thr-157, Asp-179, and Gln-202 contribute to the pyridoxal 5'-phosphate site. Lys-203 is subject to N6-(pyridoxal phosphate)lysine. 244-245 (NT) contributes to the pyridoxal 5'-phosphate binding site.

The protein belongs to the class-V pyridoxal-phosphate-dependent aminotransferase family. SerC subfamily. In terms of assembly, homodimer. Pyridoxal 5'-phosphate serves as cofactor.

The protein localises to the cytoplasm. The enzyme catalyses O-phospho-L-serine + 2-oxoglutarate = 3-phosphooxypyruvate + L-glutamate. It catalyses the reaction 4-(phosphooxy)-L-threonine + 2-oxoglutarate = (R)-3-hydroxy-2-oxo-4-phosphooxybutanoate + L-glutamate. The protein operates within amino-acid biosynthesis; L-serine biosynthesis; L-serine from 3-phospho-D-glycerate: step 2/3. It functions in the pathway cofactor biosynthesis; pyridoxine 5'-phosphate biosynthesis; pyridoxine 5'-phosphate from D-erythrose 4-phosphate: step 3/5. Its function is as follows. Catalyzes the reversible conversion of 3-phosphohydroxypyruvate to phosphoserine and of 3-hydroxy-2-oxo-4-phosphonooxybutanoate to phosphohydroxythreonine. The polypeptide is Phosphoserine aminotransferase (Neisseria meningitidis serogroup B (strain ATCC BAA-335 / MC58)).